A 297-amino-acid polypeptide reads, in one-letter code: Phosphatidylserine decarboxylase proenzyme (297 aa).

Active-site charge relay system; for autoendoproteolytic cleavage activity residues include D90, H147, and S252. S252 functions as the Schiff-base intermediate with substrate; via pyruvic acid; for decarboxylase activity in the catalytic mechanism. S252 is subject to Pyruvic acid (Ser); by autocatalysis.

It belongs to the phosphatidylserine decarboxylase family. PSD-B subfamily. Prokaryotic type I sub-subfamily. In terms of assembly, heterodimer of a large membrane-associated beta subunit and a small pyruvoyl-containing alpha subunit. Pyruvate is required as a cofactor. In terms of processing, is synthesized initially as an inactive proenzyme. Formation of the active enzyme involves a self-maturation process in which the active site pyruvoyl group is generated from an internal serine residue via an autocatalytic post-translational modification. Two non-identical subunits are generated from the proenzyme in this reaction, and the pyruvate is formed at the N-terminus of the alpha chain, which is derived from the carboxyl end of the proenzyme. The autoendoproteolytic cleavage occurs by a canonical serine protease mechanism, in which the side chain hydroxyl group of the serine supplies its oxygen atom to form the C-terminus of the beta chain, while the remainder of the serine residue undergoes an oxidative deamination to produce ammonia and the pyruvoyl prosthetic group on the alpha chain. During this reaction, the Ser that is part of the protease active site of the proenzyme becomes the pyruvoyl prosthetic group, which constitutes an essential element of the active site of the mature decarboxylase.

Its subcellular location is the cell membrane. It carries out the reaction a 1,2-diacyl-sn-glycero-3-phospho-L-serine + H(+) = a 1,2-diacyl-sn-glycero-3-phosphoethanolamine + CO2. It participates in phospholipid metabolism; phosphatidylethanolamine biosynthesis; phosphatidylethanolamine from CDP-diacylglycerol: step 2/2. In terms of biological role, catalyzes the formation of phosphatidylethanolamine (PtdEtn) from phosphatidylserine (PtdSer). The protein is Phosphatidylserine decarboxylase proenzyme of Stutzerimonas stutzeri (strain A1501) (Pseudomonas stutzeri).